The following is a 335-amino-acid chain: Putative hydrogenase expression/formation protein MJ0676 (335 aa).

The protein belongs to the HypE family.

This chain is Putative hydrogenase expression/formation protein MJ0676, found in Methanocaldococcus jannaschii (strain ATCC 43067 / DSM 2661 / JAL-1 / JCM 10045 / NBRC 100440) (Methanococcus jannaschii).